Here is a 101-residue protein sequence, read N- to C-terminus: Small ribosomal subunit protein uS14 (101 aa).

Belongs to the universal ribosomal protein uS14 family. In terms of assembly, part of the 30S ribosomal subunit. Contacts proteins S3 and S10.

Its function is as follows. Binds 16S rRNA, required for the assembly of 30S particles and may also be responsible for determining the conformation of the 16S rRNA at the A site. The chain is Small ribosomal subunit protein uS14 from Salmonella schwarzengrund (strain CVM19633).